We begin with the raw amino-acid sequence, 61 residues long: Small ribosomal subunit protein uS14 (61 aa).

Zn(2+) contacts are provided by Cys-24, Cys-27, Cys-40, and Cys-43.

Belongs to the universal ribosomal protein uS14 family. Zinc-binding uS14 subfamily. As to quaternary structure, part of the 30S ribosomal subunit. Contacts proteins S3 and S10. The cofactor is Zn(2+).

In terms of biological role, binds 16S rRNA, required for the assembly of 30S particles and may also be responsible for determining the conformation of the 16S rRNA at the A site. The protein is Small ribosomal subunit protein uS14 of Leptospira borgpetersenii serovar Hardjo-bovis (strain JB197).